Here is a 556-residue protein sequence, read N- to C-terminus: Formate--tetrahydrofolate ligase (556 aa).

65–72 (TPAGEGKS) is an ATP binding site.

Belongs to the formate--tetrahydrofolate ligase family.

It carries out the reaction (6S)-5,6,7,8-tetrahydrofolate + formate + ATP = (6R)-10-formyltetrahydrofolate + ADP + phosphate. The protein operates within one-carbon metabolism; tetrahydrofolate interconversion. This chain is Formate--tetrahydrofolate ligase, found in Clostridium perfringens (strain ATCC 13124 / DSM 756 / JCM 1290 / NCIMB 6125 / NCTC 8237 / Type A).